A 641-amino-acid polypeptide reads, in one-letter code: MHVKKYLLKGLHRLQKGPGYTYKELLVWYCDNTNTHGPKRIICEGPKKKAMWFVLTLLFTSLVCWQWGLFIKTYLNWEVSVSLSIGFKTMDFPAVTICNASPFQYSKVQHLLKDLDELMEAVLGRILGPELSQVNDTRALNLSIWHHTPLVFINEQNPHHPVVLDLFEDNFNGSASNSPAPGRPCSAHRCKVAMRLCSHNGTTCTFRNFSSATQAVTEWYTLQATNIFAQVPNQELVAMGYPAERLILACLFGAEPCNYRNFTPIFHPDYGNCYIFNWGMTEKALPSANPGTEFGLKLILDMGQEDYVPFLTSTAGARLMLHEQRSYPFIKEEGIYAMAGMETSIGVLVDKLQRKGEPYSQCTKNGSDVPIQNLYSNYNTTYSIQACIRSCFQEHMIRECGCGHYLYPLPHKRKYCNNQEFPDWAHCYSALRISLAQRETCIYACKESCNDTQYKMTISMAVWPSEASEDWIFHVLSQERDQSSNITLSRKGIVKLNIYFQEFNYRTIEESAANNIVWLLSNLGGQFGFWMGGSVLCLIEFGEIIIDFVWITIIKLVALAKSVRQKRAQARYEGPPPTVAELVEAHTNFGFQPDLATPGPDVEAYPHEQNPPIPGTPPPNYDSLRLQPLDVIESDSEGDAI.

Residues Met-1–Ala-50 are Cytoplasmic-facing. The chain crosses the membrane as a helical span at residues Met-51–Ile-71. Over Lys-72–Gly-533 the chain is Extracellular. 9 disulfide bridges follow: Cys-98–Cys-273, Cys-185–Cys-190, Cys-197–Cys-204, Cys-250–Cys-257, Cys-362–Cys-449, Cys-387–Cys-445, Cys-391–Cys-441, Cys-400–Cys-427, and Cys-402–Cys-416. The N-linked (GlcNAc...) asparagine glycan is linked to Asn-141. A glycan (N-linked (GlcNAc...) asparagine) is linked at Asn-379. Residues Ser-534 to Ile-554 form a helical membrane-spanning segment. At Lys-555 to Ile-641 the chain is on the cytoplasmic side. Residues Thr-597–Leu-624 are disordered. Over residues Gln-609 to Asn-620 the composition is skewed to pro residues. The PY motif; recruits WW domain-containing proteins and is thereby required for ubiquitination and inhibition of the channel by NEDD4 and NEDD4L motif lies at Pro-617–Tyr-621. Phosphoserine is present on residues Ser-634 and Ser-636.

This sequence belongs to the amiloride-sensitive sodium channel (TC 1.A.6) family. SCNN1B subfamily. In terms of assembly, component of the heterotrimeric epithelial sodium channel (ENaC) composed of an alpha/SCNN1A, a beta/SCNN1B and a gamma/SCNN1G subunit. An additional delta/SCNN1D subunit can replace the alpha/SCNN1A subunit to form an alternative channel with specific properties. Interacts with WWP1 (via WW domains). Interacts with WWP2 (via WW domains); inhibits the channel. Interacts with the full-length immature form of PCSK9 (pro-PCSK9). Interacts (N-glycosylated) with BPIFA1; the interaction is direct and inhibits the proteolytic processing of SCNN1A and SCNN1G and the activation of ENaC. In terms of processing, ubiquitinated. Can be ubiquitinated at multiple sites and undergo monoubiquitination and polyubiquitination. Ubiquitination by NEDD4 or NEDD4L inhibits the ENaC channel through endocytosis, intracellular retention and degradation of its individual subunits. However, some studies could not confirm the ubiquitination of this subunit of the ENaC. Phosphorylated on serine and threonine residues. Aldosterone and insulin increase the basal level of phosphorylation. Post-translationally, N-glycosylated. N-glycosylation is required for interaction with BPIFA1.

It localises to the apical cell membrane. The protein resides in the cytoplasmic vesicle membrane. It carries out the reaction Na(+)(in) = Na(+)(out). Its activity is regulated as follows. Originally identified and characterized by its inhibition by the diuretic drug amiloride. Its function is as follows. This is one of the three pore-forming subunits of the heterotrimeric epithelial sodium channel (ENaC), a critical regulator of sodium balance and fluid homeostasis. ENaC operates in epithelial tissues, where it mediates the electrodiffusion of sodium ions from extracellular fluid through the apical membrane of cells, with water following osmotically. It plays a key role in maintaining sodium homeostasis through electrogenic sodium reabsorption in the kidneys. Additionally, ENaC is essential for airway surface liquid homeostasis, which is crucial for proper mucus clearance. This is Epithelial sodium channel subunit beta from Bos taurus (Bovine).